The following is a 127-amino-acid chain: Small ribosomal subunit protein uS11 (127 aa).

This sequence belongs to the universal ribosomal protein uS11 family. In terms of assembly, part of the 30S ribosomal subunit. Interacts with proteins S7 and S18. Binds to IF-3.

Its function is as follows. Located on the platform of the 30S subunit, it bridges several disparate RNA helices of the 16S rRNA. Forms part of the Shine-Dalgarno cleft in the 70S ribosome. This Streptococcus suis (strain 98HAH33) protein is Small ribosomal subunit protein uS11.